The chain runs to 265 residues: TATA-box-binding protein (265 aa).

The disordered stretch occupies residues 1-40; sequence MYNPSQAVPVSLHKNQDNQDGGQQRSHYPQISSQQSQSYL. Residues 18-29 show a composition bias toward polar residues; sequence NQDGGQQRSHYP. Repeat copies occupy residues 91–167 and 181–258.

The protein belongs to the TBP family. As to quaternary structure, belongs to the TFIID complex together with the TBP-associated factors (TAFs). Binds DNA as monomer.

Its subcellular location is the nucleus. Functionally, general transcription factor that functions at the core of the DNA-binding multiprotein factor TFIID. Binding of TFIID to the TATA box is the initial transcriptional step of the pre-initiation complex (PIC), playing a role in the activation of eukaryotic genes transcribed by RNA polymerase II. The polypeptide is TATA-box-binding protein (Strongylocentrotus purpuratus (Purple sea urchin)).